A 494-amino-acid chain; its full sequence is Cheilanthifoline synthase (494 aa).

Residues 4 to 24 form a helical membrane-spanning segment; that stretch reads TIWLIISTVIIVLGIAKFLLG. C437 is a binding site for heme.

It belongs to the cytochrome P450 family. The cofactor is heme. Expressed in roots and at lower levels in stems, leaves and plantlets.

It is found in the endoplasmic reticulum membrane. It catalyses the reaction (S)-scoulerine + reduced [NADPH--hemoprotein reductase] + O2 = (S)-cheilanthifoline + oxidized [NADPH--hemoprotein reductase] + 2 H2O + H(+). Its function is as follows. Methylenedioxy bridge-forming cytochrome P450 involved in the biosynthesis of isoquinoline alkaloids. Converts (S)-scoulerine into (S)-cheilanthifoline, a precursor of sanguinarine. Catalyzes an oxidative reaction that does not incorporate oxygen into the product. In Argemone mexicana (Mexican prickly poppy), this protein is Cheilanthifoline synthase.